The primary structure comprises 190 residues: Guanylate kinase (190 aa).

The Guanylate kinase-like domain maps to 3-185; the sequence is NYIFIISAPS…SLEQLCKYFE (183 aa). ATP is bound at residue 10 to 17; the sequence is APSGAGKS.

The protein belongs to the guanylate kinase family.

The protein resides in the cytoplasm. It carries out the reaction GMP + ATP = GDP + ADP. Essential for recycling GMP and indirectly, cGMP. The chain is Guanylate kinase from Francisella tularensis subsp. holarctica (strain OSU18).